The sequence spans 561 residues: GPI mannosyltransferase 3 (561 aa).

The next 8 membrane-spanning stretches (helical) occupy residues 3 to 25 (LIYVFLLILAVRLASVFVVQTYY), 64 to 84 (IAGLYKILALLQLDSAHLLVV), 110 to 130 (WALFLILVPWFWFYTGSRTLA), 155 to 175 (LWPAAICCFLRPTAAVIWLPL), 195 to 215 (FVLIGLLVAGLGIAIDTYWHG), 246 to 266 (FSVGLPTVLGINTLPFIFGVM), 275 to 295 (YPVSKQLLITIFLTLVVLSAV), and 328 to 348 (TMLWTTALVILVGNVMPAWYL). N-linked (GlcNAc...) asparagine glycosylation is found at Asn398 and Asn456. Positions 525–546 (ENAFNRGPDSGQHEPDVHDHPP) are disordered. A compositionally biased stretch (basic and acidic residues) spans 535-546 (GQHEPDVHDHPP).

This sequence belongs to the glycosyltransferase 22 family. PIGB subfamily.

It is found in the endoplasmic reticulum membrane. The protein operates within glycolipid biosynthesis; glycosylphosphatidylinositol-anchor biosynthesis. In terms of biological role, mannosyltransferase involved in glycosylphosphatidylinositol-anchor biosynthesis. Transfers the third alpha-1,2-mannose to Man2-GlcN-acyl-PI during GPI precursor assembly. The protein is GPI mannosyltransferase 3 of Drosophila melanogaster (Fruit fly).